A 507-amino-acid chain; its full sequence is DNA ligase B (507 aa).

The not required for adenylyltransferase activity, required for nick joining stretch occupies residues 1-172; the sequence is MLLHDVAITS…AAAAGLSGAA (172 aa). Glutamate 209 lines the ATP pocket. Catalysis depends on lysine 211, which acts as the N6-AMP-lysine intermediate. Residues arginine 216, arginine 231, glutamate 260, phenylalanine 300, arginine 372, and lysine 378 each coordinate ATP.

This sequence belongs to the ATP-dependent DNA ligase family. In terms of assembly, monomer. It depends on Mg(2+) as a cofactor.

The enzyme catalyses ATP + (deoxyribonucleotide)n-3'-hydroxyl + 5'-phospho-(deoxyribonucleotide)m = (deoxyribonucleotide)n+m + AMP + diphosphate.. In terms of biological role, DNA ligase that seals nicks in double-stranded DNA during DNA replication, DNA recombination and DNA repair. This Mycobacterium tuberculosis (strain ATCC 25618 / H37Rv) protein is DNA ligase B (ligB).